We begin with the raw amino-acid sequence, 157 residues long: 6,7-dimethyl-8-ribityllumazine synthase (157 aa).

5-amino-6-(D-ribitylamino)uracil is bound by residues Phe-24, 56 to 58, and 79 to 81; these read SFE and VLI. 84-85 is a (2S)-2-hydroxy-3-oxobutyl phosphate binding site; sequence ET. The Proton donor role is filled by His-87. A 5-amino-6-(D-ribitylamino)uracil-binding site is contributed by Phe-112. A (2S)-2-hydroxy-3-oxobutyl phosphate-binding site is contributed by Arg-126.

The protein belongs to the DMRL synthase family.

The catalysed reaction is (2S)-2-hydroxy-3-oxobutyl phosphate + 5-amino-6-(D-ribitylamino)uracil = 6,7-dimethyl-8-(1-D-ribityl)lumazine + phosphate + 2 H2O + H(+). It functions in the pathway cofactor biosynthesis; riboflavin biosynthesis; riboflavin from 2-hydroxy-3-oxobutyl phosphate and 5-amino-6-(D-ribitylamino)uracil: step 1/2. Functionally, catalyzes the formation of 6,7-dimethyl-8-ribityllumazine by condensation of 5-amino-6-(D-ribitylamino)uracil with 3,4-dihydroxy-2-butanone 4-phosphate. This is the penultimate step in the biosynthesis of riboflavin. The protein is 6,7-dimethyl-8-ribityllumazine synthase of Pyrococcus furiosus (strain ATCC 43587 / DSM 3638 / JCM 8422 / Vc1).